Reading from the N-terminus, the 632-residue chain is Asparagine synthetase [glutamine-hydrolyzing] 1 (632 aa).

C2 (for GATase activity) is an active-site residue. Positions C2–D214 constitute a Glutamine amidotransferase type-2 domain. Residues R52–I56, N77–E79, and D102 each bind L-glutamine. Residues V288 and S361–G362 each bind ATP.

The protein belongs to the asparagine synthetase family.

The catalysed reaction is L-aspartate + L-glutamine + ATP + H2O = L-asparagine + L-glutamate + AMP + diphosphate + H(+). The protein operates within amino-acid biosynthesis; L-asparagine biosynthesis; L-asparagine from L-aspartate (L-Gln route): step 1/1. Main asparagine synthetase in vegetative cells. This is Asparagine synthetase [glutamine-hydrolyzing] 1 (asnB) from Bacillus subtilis (strain 168).